The following is a 202-amino-acid chain: ATP-dependent Clp protease proteolytic subunit 1 (202 aa).

Ser101 (nucleophile) is an active-site residue. His126 is a catalytic residue.

This sequence belongs to the peptidase S14 family. Fourteen ClpP subunits assemble into 2 heptameric rings which stack back to back to give a disk-like structure with a central cavity, resembling the structure of eukaryotic proteasomes.

The protein resides in the cytoplasm. The catalysed reaction is Hydrolysis of proteins to small peptides in the presence of ATP and magnesium. alpha-casein is the usual test substrate. In the absence of ATP, only oligopeptides shorter than five residues are hydrolyzed (such as succinyl-Leu-Tyr-|-NHMec, and Leu-Tyr-Leu-|-Tyr-Trp, in which cleavage of the -Tyr-|-Leu- and -Tyr-|-Trp bonds also occurs).. Its function is as follows. Cleaves peptides in various proteins in a process that requires ATP hydrolysis. Has a chymotrypsin-like activity. Plays a major role in the degradation of misfolded proteins. The protein is ATP-dependent Clp protease proteolytic subunit 1 of Rhizobium etli (strain ATCC 51251 / DSM 11541 / JCM 21823 / NBRC 15573 / CFN 42).